Consider the following 307-residue polypeptide: 4-hydroxythreonine-4-phosphate dehydrogenase (307 aa).

Residues His126 and Thr127 each contribute to the substrate site. Residues His156, His195, and His251 each contribute to the a divalent metal cation site. Residues Lys259, Asn268, and Arg277 each contribute to the substrate site.

It belongs to the PdxA family. Homodimer. Requires Zn(2+) as cofactor. It depends on Mg(2+) as a cofactor. Co(2+) serves as cofactor.

It localises to the cytoplasm. The catalysed reaction is 4-(phosphooxy)-L-threonine + NAD(+) = 3-amino-2-oxopropyl phosphate + CO2 + NADH. Its pathway is cofactor biosynthesis; pyridoxine 5'-phosphate biosynthesis; pyridoxine 5'-phosphate from D-erythrose 4-phosphate: step 4/5. In terms of biological role, catalyzes the NAD(P)-dependent oxidation of 4-(phosphooxy)-L-threonine (HTP) into 2-amino-3-oxo-4-(phosphooxy)butyric acid which spontaneously decarboxylates to form 3-amino-2-oxopropyl phosphate (AHAP). This Helicobacter pylori (strain Shi470) protein is 4-hydroxythreonine-4-phosphate dehydrogenase.